The primary structure comprises 295 residues: Acetaldehyde dehydrogenase 2 (295 aa).

17–20 (TGNI) lines the NAD(+) pocket. Residue cysteine 132 is the Acyl-thioester intermediate of the active site. NAD(+) contacts are provided by residues 164-172 (SVGPASRAN) and asparagine 275.

The protein belongs to the acetaldehyde dehydrogenase family.

The enzyme catalyses acetaldehyde + NAD(+) + CoA = acetyl-CoA + NADH + H(+). In Salinispora arenicola (strain CNS-205), this protein is Acetaldehyde dehydrogenase 2.